The following is a 970-amino-acid chain: Sodium/calcium exchanger 1 (970 aa).

The first 32 residues, 1 to 32, serve as a signal peptide directing secretion; the sequence is MLQFSLSPTLSMGFHVIAMVALLFSHVDHISA. The Extracellular segment spans residues 33–71; it reads ETEMEGEGNETGECTGSYYCKKGVILPIWEPQDPSFGDK. A glycan (N-linked (GlcNAc...) asparagine) is linked at Asn41. A helical membrane pass occupies residues 72–92; sequence IARATVYFVAMVYMFLGVSII. Residues 93–133 lie on the Cytoplasmic side of the membrane; it reads ADRFMSSIEVITSQEKEITIKKPNGETTKTTVRIWNETVSN. Residues 134 to 154 form a helical membrane-spanning segment; it reads LTLMALGSSAPEILLSVIEVC. An Alpha-1 repeat occupies 138–178; it reads ALGSSAPEILLSVIEVCGHNFTAGDLGPSTIVGSAAFNMFI. Over 155-167 the chain is Extracellular; the sequence is GHNFTAGDLGPST. N-linked (GlcNAc...) asparagine glycosylation is present at Asn157. A helical transmembrane segment spans residues 168-188; it reads IVGSAAFNMFIIIALCVYVVP. Residues 189–201 are Cytoplasmic-facing; that stretch reads DGETRKIKHLRVF. The chain crosses the membrane as a helical span at residues 202–222; the sequence is FVTAAWSIFAYTWLYIILSVS. Residues 223–228 lie on the Extracellular side of the membrane; that stretch reads SPGVVE. Residues 229-249 traverse the membrane as a helical segment; sequence VWEGLLTFFFFPICVVFAWVA. The Cytoplasmic portion of the chain corresponds to 250 to 797; it reads DRRLLFYKYV…FVPPTEYWNG (548 aa). Residues 251-270 form a putative calmodulin-binding region region; it reads RRLLFYKYVYKRYRAGKQRG. Phosphoserine is present on residues Ser282 and Ser389. Calx-beta domains are found at residues 393–493 and 524–624; these read VNTE…VHLS and ATVT…LEIG. 16 residues coordinate Ca(2+): Glu417, Asp453, Asp478, Asp479, Ile481, Glu483, Glu486, Asp530, Asp531, Asp532, Glu548, Asp584, Asp610, Glu611, Glu612, and Glu715. A helical transmembrane segment spans residues 798 to 818; that stretch reads WACFIVSILMIGLLTAFIGDL. Residues 819 to 821 lie on the Extracellular side of the membrane; sequence ASH. A helical membrane pass occupies residues 822 to 842; it reads FACTIALKDSVTAVVFVALGT. Residues 839 to 875 form an Alpha-2 repeat; the sequence is ALGTSVPDTFASKVAATQDQYADASIGNVTGSNAVNV. The Cytoplasmic portion of the chain corresponds to 843-871; that stretch reads SVPDTFASKVAATQDQYADASIGNVTGSN. The helical transmembrane segment at 872-892 threads the bilayer; sequence AVNVFLGIGVAWSIAAIYHAA. Topologically, residues 893–903 are extracellular; sequence NGEQFKVSPGT. The helical transmembrane segment at 904 to 924 threads the bilayer; that stretch reads LAFSVTLFTIFAFINVGVLLY. The Cytoplasmic portion of the chain corresponds to 925-941; the sequence is RRRPEIGGELGGPRTAK. A helical membrane pass occupies residues 942 to 962; it reads LLTSCLFVLLWLLYIFFSSLE. The Extracellular portion of the chain corresponds to 963-970; that stretch reads AYCHIKGF.

This sequence belongs to the Ca(2+):cation antiporter (CaCA) (TC 2.A.19) family. SLC8 subfamily.

It is found in the cell membrane. The catalysed reaction is Ca(2+)(in) + 3 Na(+)(out) = Ca(2+)(out) + 3 Na(+)(in). Its activity is regulated as follows. Activated by micromolar levels of Ca(2+). Functionally, mediates the exchange of one Ca(2+) ion against three to four Na(+) ions across the cell membrane, and thereby contributes to the regulation of cytoplasmic Ca(2+) levels and Ca(2+)-dependent cellular processes. Contributes to Ca(2+) transport during excitation-contraction coupling in muscle. In a first phase, voltage-gated channels mediate the rapid increase of cytoplasmic Ca(2+) levels due to release of Ca(2+) stores from the endoplasmic reticulum. SLC8A1 mediates the export of Ca(2+) from the cell during the next phase, so that cytoplasmic Ca(2+) levels rapidly return to baseline. Required for normal embryonic heart development and the onset of heart contractions. In Bos taurus (Bovine), this protein is Sodium/calcium exchanger 1 (SLC8A1).